The chain runs to 252 residues: Flap endonuclease Xni (252 aa).

D105 serves as a coordination point for Mg(2+). The region spanning 161-251 (VESTQFIDYL…NVNLKQFRIE (91 aa)) is the 5'-3' exonuclease domain. Positions 172, 173, 181, 183, and 186 each coordinate K(+). An interaction with DNA region spans residues 185–190 (GIGPKS).

Belongs to the Xni family. Mg(2+) is required as a cofactor. It depends on K(+) as a cofactor.

In terms of biological role, has flap endonuclease activity. During DNA replication, flap endonucleases cleave the 5'-overhanging flap structure that is generated by displacement synthesis when DNA polymerase encounters the 5'-end of a downstream Okazaki fragment. The protein is Flap endonuclease Xni of Shewanella halifaxensis (strain HAW-EB4).